Consider the following 450-residue polypeptide: Probable glycine dehydrogenase (decarboxylating) subunit 1 (450 aa).

The protein belongs to the GcvP family. N-terminal subunit subfamily. The glycine cleavage system is composed of four proteins: P, T, L and H. In this organism, the P 'protein' is a heterodimer of two subunits.

It carries out the reaction N(6)-[(R)-lipoyl]-L-lysyl-[glycine-cleavage complex H protein] + glycine + H(+) = N(6)-[(R)-S(8)-aminomethyldihydrolipoyl]-L-lysyl-[glycine-cleavage complex H protein] + CO2. Its function is as follows. The glycine cleavage system catalyzes the degradation of glycine. The P protein binds the alpha-amino group of glycine through its pyridoxal phosphate cofactor; CO(2) is released and the remaining methylamine moiety is then transferred to the lipoamide cofactor of the H protein. The protein is Probable glycine dehydrogenase (decarboxylating) subunit 1 of Brevibacillus brevis (strain 47 / JCM 6285 / NBRC 100599).